Consider the following 366-residue polypeptide: Spermine synthase (366 aa).

Residue alanine 2 is modified to N-acetylalanine. Serine 57 carries the post-translational modification Phosphoserine. Residues 122–362 (RYWPTADGRL…ELWVFYTVWK (241 aa)) enclose the PABS domain. Glutamine 148 is an S-adenosyl 3-(methylsulfanyl)propylamine binding site. Spermidine is bound by residues tyrosine 177 and aspartate 201. Residues glutamate 220 and 255-256 (DC) each bind S-adenosyl 3-(methylsulfanyl)propylamine. Aspartate 276 (proton acceptor) is an active-site residue. Tyrosine 351 and glutamate 353 together coordinate spermidine.

The protein belongs to the spermidine/spermine synthase family. In terms of assembly, homodimer. Dimerization is mediated through the N-terminal domain and seems to be required for activity as deletion of the N-terminal domain causes complete loss of activity.

The catalysed reaction is S-adenosyl 3-(methylsulfanyl)propylamine + spermidine = spermine + S-methyl-5'-thioadenosine + H(+). It functions in the pathway amine and polyamine biosynthesis; spermine biosynthesis; spermine from spermidine: step 1/1. Catalyzes the production of spermine from spermidine and decarboxylated S-adenosylmethionine (dcSAM). This chain is Spermine synthase, found in Homo sapiens (Human).